Here is a 251-residue protein sequence, read N- to C-terminus: 5-oxoprolinase subunit A 2 (251 aa).

It belongs to the LamB/PxpA family. In terms of assembly, forms a complex composed of PxpA, PxpB and PxpC.

The enzyme catalyses 5-oxo-L-proline + ATP + 2 H2O = L-glutamate + ADP + phosphate + H(+). Catalyzes the cleavage of 5-oxoproline to form L-glutamate coupled to the hydrolysis of ATP to ADP and inorganic phosphate. The protein is 5-oxoprolinase subunit A 2 of Pseudomonas syringae pv. tomato (strain ATCC BAA-871 / DC3000).